Here is a 458-residue protein sequence, read N- to C-terminus: UDP-N-acetylmuramate--L-alanine ligase (458 aa).

Position 118–124 (118–124 (GTHGKTT)) interacts with ATP.

Belongs to the MurCDEF family.

The protein localises to the cytoplasm. It carries out the reaction UDP-N-acetyl-alpha-D-muramate + L-alanine + ATP = UDP-N-acetyl-alpha-D-muramoyl-L-alanine + ADP + phosphate + H(+). It functions in the pathway cell wall biogenesis; peptidoglycan biosynthesis. Cell wall formation. The chain is UDP-N-acetylmuramate--L-alanine ligase from Clostridium botulinum (strain Okra / Type B1).